The primary structure comprises 181 residues: Translation initiation factor IF-3 (181 aa).

The protein belongs to the IF-3 family. Monomer.

It is found in the cytoplasm. In terms of biological role, IF-3 binds to the 30S ribosomal subunit and shifts the equilibrium between 70S ribosomes and their 50S and 30S subunits in favor of the free subunits, thus enhancing the availability of 30S subunits on which protein synthesis initiation begins. This chain is Translation initiation factor IF-3, found in Mycoplasma mycoides subsp. mycoides SC (strain CCUG 32753 / NCTC 10114 / PG1).